Here is a 384-residue protein sequence, read N- to C-terminus: Spermatogenesis-associated protein 32 (384 aa).

The tract at residues 23–60 is disordered; sequence RDDLSQHQIQEEQELEADMLEQKPQLQVDLDLDPDPDP. 2 positions are modified to phosphoserine: Ser167 and Ser170. Disordered stretches follow at residues 211–232, 284–310, and 340–366; these read DAHS…SSDL, VEER…LKSW, and LLQP…EKEN. A compositionally biased stretch (low complexity) spans 214 to 231; it reads SAPPTTSSQAPSPLLSSD. The segment covering 353–366 has biased composition (basic and acidic residues); it reads SKEDSVPPGKEKEN.

Interacts with syntaxin-1 and ACTB. In terms of tissue distribution, detected in testis, and on the acrosomal cap of spermatids.

This is Spermatogenesis-associated protein 32 (SPATA32) from Homo sapiens (Human).